Reading from the N-terminus, the 1401-residue chain is DNA-directed RNA polymerase subunit beta' (1401 aa).

Zn(2+)-binding residues include Cys71, Cys73, Cys86, and Cys89. Mg(2+) is bound by residues Asp462, Asp464, and Asp466. The Zn(2+) site is built by Cys810, Cys884, Cys891, and Cys894. The segment at 1378 to 1401 is disordered; that stretch reads EKQATIVPSAPEPEPLALPTPEQS.

The protein belongs to the RNA polymerase beta' chain family. The RNAP catalytic core consists of 2 alpha, 1 beta, 1 beta' and 1 omega subunit. When a sigma factor is associated with the core the holoenzyme is formed, which can initiate transcription. The cofactor is Mg(2+). Zn(2+) is required as a cofactor.

The enzyme catalyses RNA(n) + a ribonucleoside 5'-triphosphate = RNA(n+1) + diphosphate. DNA-dependent RNA polymerase catalyzes the transcription of DNA into RNA using the four ribonucleoside triphosphates as substrates. This chain is DNA-directed RNA polymerase subunit beta', found in Rhodopseudomonas palustris (strain BisB18).